A 396-amino-acid polypeptide reads, in one-letter code: Elongation factor Tu (396 aa).

The region spanning 10 to 205 is the tr-type G domain; it reads KPHVNIGTIG…AVDESIPDPV (196 aa). Residues 19 to 26 are G1; sequence GHVDHGKT. 19-26 contacts GTP; the sequence is GHVDHGKT. Residue T26 participates in Mg(2+) binding. The G2 stretch occupies residues 62–66; sequence GITIN. The segment at 83-86 is G3; it reads DAPG. Residues 83–87 and 138–141 each bind GTP; these read DAPGH and NKAD. A G4 region spans residues 138-141; it reads NKAD. Positions 175–177 are G5; sequence SAL.

It belongs to the TRAFAC class translation factor GTPase superfamily. Classic translation factor GTPase family. EF-Tu/EF-1A subfamily. In terms of assembly, monomer.

It is found in the cytoplasm. The catalysed reaction is GTP + H2O = GDP + phosphate + H(+). GTP hydrolase that promotes the GTP-dependent binding of aminoacyl-tRNA to the A-site of ribosomes during protein biosynthesis. In Mycobacterium avium (strain 104), this protein is Elongation factor Tu.